The following is a 477-amino-acid chain: Histidine--tRNA ligase (477 aa).

The protein belongs to the class-II aminoacyl-tRNA synthetase family. Homodimer.

It is found in the cytoplasm. It catalyses the reaction tRNA(His) + L-histidine + ATP = L-histidyl-tRNA(His) + AMP + diphosphate + H(+). The protein is Histidine--tRNA ligase (hisS) of Xanthomonas campestris pv. campestris (strain ATCC 33913 / DSM 3586 / NCPPB 528 / LMG 568 / P 25).